Reading from the N-terminus, the 29-residue chain is Beta-hexatoxin-Mr1a (29 aa).

Disulfide bonds link C2-C16, C9-C21, and C15-C26.

This sequence belongs to the neurotoxin 15 family. 01 (magi-5) subfamily. Expressed by the venom gland.

Its subcellular location is the secreted. Insect and vertebrate active toxin. Binds at site 4 of mammalian voltage-gated sodium channels and shifts the activation voltage of the mammalian rNav1.2a (SCN2A) channel to more hyperpolarized voltages, whereas the insect channel, DmNav1 (para), is not affected. Causes temporary paralysis when injected into lepidopteran larvae at 8.6 nmol/g. A low intracranial injection dose into mice causes lacrimation, closure of the eyes and sweating. A high injection dose causes extensive lacrimation and death. In Macrothele raveni (Funnel-web spider), this protein is Beta-hexatoxin-Mr1a.